A 367-amino-acid polypeptide reads, in one-letter code: tRNA-specific 2-thiouridylase MnmA (367 aa).

ATP contacts are provided by residues 6 to 13 (AMSGGVDS) and Met32. Cys101 functions as the Nucleophile in the catalytic mechanism. Cys101 and Cys193 are disulfide-bonded. Position 125 (Gly125) interacts with ATP. An interaction with tRNA region spans residues 143 to 145 (KDQ). Residue Cys193 is the Cysteine persulfide intermediate of the active site.

Belongs to the MnmA/TRMU family.

Its subcellular location is the cytoplasm. The enzyme catalyses S-sulfanyl-L-cysteinyl-[protein] + uridine(34) in tRNA + AH2 + ATP = 2-thiouridine(34) in tRNA + L-cysteinyl-[protein] + A + AMP + diphosphate + H(+). In terms of biological role, catalyzes the 2-thiolation of uridine at the wobble position (U34) of tRNA, leading to the formation of s(2)U34. This Mycobacterium tuberculosis (strain CDC 1551 / Oshkosh) protein is tRNA-specific 2-thiouridylase MnmA.